Here is a 276-residue protein sequence, read N- to C-terminus: Secreted LysM effector LysM10 (276 aa).

Positions 1–22 are cleaved as a signal peptide; sequence MLLSLVKFGILSVFLLAQEAVA. N-linked (GlcNAc...) asparagine glycans are attached at residues N27, N104, and N140. One can recognise a LysM domain in the interval 219 to 264; it reads KTYIAKEDDTCKSISEAQSISTDRLVEVNHLDYSCSSLTSGTALCI. N-linked (GlcNAc...) asparagine glycosylation occurs at N267.

Belongs to the secreted LysM effector family.

It is found in the secreted. Its function is as follows. Secreted LysM effector that might have a role in sequestration of chitin oligosaccharides (breakdown products of fungal cell walls that are released during invasion and act as triggers of host immunity) to dampen host defense. The protein is Secreted LysM effector LysM10 of Penicillium expansum (Blue mold rot fungus).